A 542-amino-acid polypeptide reads, in one-letter code: uncharacterized protein (542 aa).

The next 12 membrane-spanning stretches (helical) occupy residues 12 to 32 (LVFG…GTVL), 57 to 77 (FGDV…AILY), 94 to 114 (VIVM…SWTA), 123 to 143 (AAAV…AGLA), 168 to 188 (LFAV…AALV), 191 to 211 (FVVS…LVTL), 216 to 236 (IDAP…AFLL), 243 to 263 (SGVV…PTVI), 277 to 297 (IATF…IPGA), 313 to 333 (VLAL…VQAT), 358 to 378 (VTSW…AVPM), and 391 to 411 (LIIF…GTSL).

This sequence belongs to the monovalent cation:proton antiporter 1 (CPA1) transporter (TC 2.A.36) family.

It localises to the cell membrane. This is an uncharacterized protein from Mycobacterium bovis (strain ATCC BAA-935 / AF2122/97).